The chain runs to 183 residues: Oligoribonuclease (183 aa).

Residues 8-171 enclose the Exonuclease domain; that stretch reads LIWIDLEMTG…DDIRDSIHEL (164 aa). Residue Y129 is part of the active site.

It belongs to the oligoribonuclease family.

It is found in the cytoplasm. 3'-to-5' exoribonuclease specific for small oligoribonucleotides. The polypeptide is Oligoribonuclease (Halorhodospira halophila (strain DSM 244 / SL1) (Ectothiorhodospira halophila (strain DSM 244 / SL1))).